A 379-amino-acid chain; its full sequence is Demethylspheroidene O-methyltransferase (379 aa).

Residues D235 and R279 each contribute to the S-adenosyl-L-methionine site.

It belongs to the class I-like SAM-binding methyltransferase superfamily. Cation-independent O-methyltransferase family.

The catalysed reaction is demethylspheroidene + S-adenosyl-L-methionine = spheroidene + S-adenosyl-L-homocysteine + H(+). Its pathway is carotenoid biosynthesis; spheroidene biosynthesis. Its function is as follows. Methyltransferase that mediates the O-methylation of 1-hydroxy carotenoids. Converts hydroxyneurosporene to methoxyneurosporene or demethylspheroidene to spheroidene. Also able to produce spirilloxanthin. This is Demethylspheroidene O-methyltransferase (crtF) from Cereibacter sphaeroides (strain ATCC 17023 / DSM 158 / JCM 6121 / CCUG 31486 / LMG 2827 / NBRC 12203 / NCIMB 8253 / ATH 2.4.1.) (Rhodobacter sphaeroides).